The sequence spans 193 residues: Early light-induced protein 2, chloroplastic (193 aa).

A chloroplast-targeting transit peptide spans 1-43; sequence MATASFNMQSVFAAPSGVLTTRNIRNTNQLFFKRIAPVGVRCM. Residues 46 to 80 are disordered; that stretch reads GDPIKEDPSVPSTSTSATPPQMPQSPPPPVSKPKV. Over residues 54–64 the composition is skewed to low complexity; sequence SVPSTSTSATP. Pro residues predominate over residues 65-76; that stretch reads PQMPQSPPPPVS. 3 helical membrane-spanning segments follow: residues 102–122, 129–149, and 173–193; these read LAMV…ENVF, GVGW…VPLF, and FAML…GTLV.

The protein belongs to the ELIP/psbS family.

The protein resides in the plastid. Its subcellular location is the chloroplast thylakoid membrane. In terms of biological role, probably involved in the integration of pigments into the mature light-harvesting pigment-protein complexes. Light-harvesting chlorophyll (LHC) a/b-binding protein required to ensure a high rate of chlorophyll accumulation during deetiolation in continuous high light. Involved in seed germination. May fulfill a photoprotective functions. Prevents excess accumulation of free chlorophyll by inhibiting the entire chlorophyll biosynthesis pathway (e.g. 5-aminolevulinate synthesis and Mg-protoporphyrin IX chelatase activity), and hence prevent photooxidative stress. The sequence is that of Early light-induced protein 2, chloroplastic from Arabidopsis thaliana (Mouse-ear cress).